Here is a 303-residue protein sequence, read N- to C-terminus: HTH-type transcriptional regulator CatM (303 aa).

In terms of domain architecture, HTH lysR-type spans 1–58 (MELRHLRYFVTVVEEQSISKAAEKLCIAQPPLSRQIQKLEEELGIQLFERGFRPAKVT). A DNA-binding region (H-T-H motif) is located at residues 18 to 37 (ISKAAEKLCIAQPPLSRQIQ). Serine 99 and threonine 128 together coordinate cis,cis-muconate.

The protein belongs to the LysR transcriptional regulatory family. As to quaternary structure, homotetramer in solution.

Functionally, positively regulates the expression of catA, catBCIJFD and benPK in response to cis,cis-muconate. It binds to the catB-catM intercistronic region, to a specific sequence upstream of catA and to the benPK promoter region. Can also repress pca genes. This chain is HTH-type transcriptional regulator CatM (catM), found in Acinetobacter baylyi (strain ATCC 33305 / BD413 / ADP1).